We begin with the raw amino-acid sequence, 1036 residues long: MKKNIALMALTGVLTLASCGQNGNTPTADTTAPTVSLSVNNANLPSGVGSVVLSGTVNEASTVVVKNNAGTTVCTVEVAASGTFTCPATTIAGNTSTTSTSTSYTATATDAAKNVGTSSVVTVNVAGVSNPAPTTAVLTIDLAGVSSAPITIKDANGNVVQGYDNVTVNDNATITVARGVYTVTAGNVSGFNGPTTNFRVDLSGGNQTVTLNYTQAGTTTPTPVGSINILTPAVGTSVTGGSTVRVTFDKANEVQCMVGGAAAVTAQVDSTSGYCDVVVPNSTGNVVITVMGKGVNGQTVTATRNISVTQAAVSYGVVTPAGDQELTLTSEGIVRDADSGWRRLGQGVSTPSDPNLNLDIYIKGTVNFSVNAPAGQKVELFLARTTGSDVPTNDDIQAGDVLRSVASTSGTETFSLDSRRLAEFDGVRKWIVVRINGTQVTYQPVIADNKGPQQPDPELNGVQNAYSNILNNYNNSGLTYVRGPVNVFTSNPSLQDREFGQAPVGSSFVQRRPAGFESIRYYLVPESAFNNKALQESDEMLRAKAVKSVATVVSAPVLEPGTVKATSFSRVIGSGATSTVAPKALDNVTYRVYAISRDQVGNETASATYDLVRFDNVGPTITGSVIRDTSDLPFPSQEPERCLSDIATISLGGIADNVGGVGLNPGQGLTFTLGGRQIQAGQFDTNQLADPEYTIGFNSLTDALGNPVVTAPTNAKVYIDNTDPTVNFNRAVMQGTYASGGRVSVESDASDGGCGVYETRLFWDTANGVVDDATTTPAIGHPVQFARQRVTDGAKADSLNAGWNALQLPNGAGAVYLRSLVVDRAGNATISTTSIVVNAKITNQARPLLGGFDAFKRNASAQFVGDDNVIAGVNGTAATPNVTGNSALDNILSLDSVGTLTTNAYLPRGATETAITEKIRNVGAYGRFDATQWNLIRDYQLNTDPTLRSAYVNAGNLANQRGNNWRIRTPWVELGSSDTANTQQKFDFNSDLLNDFYYGRTFGNNHSVNLFSYDQFNGVVSDTAGAYSFYGETVRK.

An N-terminal signal peptide occupies residues 1-17 (MKKNIALMALTGVLTLA). Cystine bridges form between Cys74–Cys86, Cys256–Cys275, and Cys642–Cys754.

In terms of processing, glycosylated; contains six glycans. Acylated in the N-terminal region. Post-translationally, the N-terminus is blocked.

Its subcellular location is the secreted. The protein resides in the cell wall. It localises to the S-layer. Functionally, shape maintenance, possible protection from noxious enzymes or exogenous and unsettling DNA, and may mediate homotypic cell-cell contacts. The protein is Hexagonally packed intermediate-layer surface protein (hpi) of Deinococcus radiodurans.